The chain runs to 184 residues: ATP synthase subunit b (184 aa).

The chain crosses the membrane as a helical span at residues 19–39 (IIVGVILVLLLTWLIAKAVVP).

Belongs to the ATPase B chain family. In terms of assembly, F-type ATPases have 2 components, F(1) - the catalytic core - and F(0) - the membrane proton channel. F(1) has five subunits: alpha(3), beta(3), gamma(1), delta(1), epsilon(1). F(0) has three main subunits: a(1), b(2) and c(10-14). The alpha and beta chains form an alternating ring which encloses part of the gamma chain. F(1) is attached to F(0) by a central stalk formed by the gamma and epsilon chains, while a peripheral stalk is formed by the delta and b chains.

Its subcellular location is the cell membrane. Functionally, f(1)F(0) ATP synthase produces ATP from ADP in the presence of a proton or sodium gradient. F-type ATPases consist of two structural domains, F(1) containing the extramembraneous catalytic core and F(0) containing the membrane proton channel, linked together by a central stalk and a peripheral stalk. During catalysis, ATP synthesis in the catalytic domain of F(1) is coupled via a rotary mechanism of the central stalk subunits to proton translocation. In terms of biological role, component of the F(0) channel, it forms part of the peripheral stalk, linking F(1) to F(0). This is ATP synthase subunit b from Cutibacterium acnes (strain DSM 16379 / KPA171202) (Propionibacterium acnes).